The following is a 47-amino-acid chain: Large ribosomal subunit protein bL34 (47 aa).

The tract at residues 1-28 is disordered; the sequence is MAKGKRTFQPNNRRRARVHGFRTRMRTR.

The protein belongs to the bacterial ribosomal protein bL34 family.

The chain is Large ribosomal subunit protein bL34 from Corynebacterium efficiens (strain DSM 44549 / YS-314 / AJ 12310 / JCM 11189 / NBRC 100395).